We begin with the raw amino-acid sequence, 566 residues long: Unconventional myosin-VIIa (566 aa).

The 500-residue stretch at 67–566 (MMEDMIQHLG…AGVVYYESQG (500 aa)) folds into the Myosin motor domain. Residue 160–167 (GESGAGKT) participates in ATP binding.

Belongs to the TRAFAC class myosin-kinesin ATPase superfamily. Myosin family. Might homodimerize in a two headed molecule through the formation of a coiled-coil rod. Identified in a complex with USH1C and USH1G. Interacts with MYRIP. Interacts with RPE65. Interacts with CIB2. May interact with CALM. Interacts with WHRN. Interacts with PLEKHB1 (via PH domain). Interacts with PCDH15. Interacts with TWF2. Interacts with USH1G. Interacts with MYH9. Interacts (via MyTH4-FERM domains) with cytoplasmic regions of ADGRV1 and USH2A. Interacts with PDZD7 (via MyTH4-FERM domains). Interacts with CALML4.

It localises to the cytoplasm. The protein resides in the cell cortex. Its subcellular location is the cytoskeleton. It is found in the synapse. In terms of biological role, myosins are actin-based motor molecules with ATPase activity. Unconventional myosins serve in intracellular movements. Their highly divergent tails bind to membranous compartments, which are then moved relative to actin filaments. In the retina, plays an important role in the renewal of the outer photoreceptor disks. Plays an important role in the distribution and migration of retinal pigment epithelial (RPE) melanosomes and phagosomes, and in the regulation of opsin transport in retinal photoreceptors. In the inner ear, plays an important role in differentiation, morphogenesis and organization of cochlear hair cell bundles. Motor protein that is a part of the functional network formed by USH1C, USH1G, CDH23 and MYO7A that mediates mechanotransduction in cochlear hair cells. Required for normal hearing. Involved in hair-cell vesicle trafficking of aminoglycosides, which are known to induce ototoxicity. The sequence is that of Unconventional myosin-VIIa (MYO7A) from Sus scrofa (Pig).